A 156-amino-acid chain; its full sequence is Small ribosomal subunit protein uS7 (156 aa).

Belongs to the universal ribosomal protein uS7 family. As to quaternary structure, part of the 30S ribosomal subunit. Contacts proteins S9 and S11.

One of the primary rRNA binding proteins, it binds directly to 16S rRNA where it nucleates assembly of the head domain of the 30S subunit. Is located at the subunit interface close to the decoding center, probably blocks exit of the E-site tRNA. The protein is Small ribosomal subunit protein uS7 of Bartonella henselae (strain ATCC 49882 / DSM 28221 / CCUG 30454 / Houston 1) (Rochalimaea henselae).